Reading from the N-terminus, the 576-residue chain is Arginine--tRNA ligase (576 aa).

The 'HIGH' region signature appears at 122–132 (PNVAKEMHVGH).

This sequence belongs to the class-I aminoacyl-tRNA synthetase family. As to quaternary structure, monomer.

The protein resides in the cytoplasm. It carries out the reaction tRNA(Arg) + L-arginine + ATP = L-arginyl-tRNA(Arg) + AMP + diphosphate. The protein is Arginine--tRNA ligase of Hamiltonella defensa subsp. Acyrthosiphon pisum (strain 5AT).